The sequence spans 818 residues: ATM interactor (818 aa).

Over residues 1–34 (MAATEAAAADSAGPAPGVPATPASTRGAAAASSP) the composition is skewed to low complexity. A disordered region spans residues 1-62 (MAATEAAAAD…RAAAPVPPAR (62 aa)). The C2H2-type 1 zinc finger occupies 80–105 (ILCTVRGCGKILPNSPALNMHLVKSH). The segment at 161-181 (HKCSKCSNSYGTEWDLKRHEE) adopts a C2H2-type 2; degenerate zinc-finger fold. Residues 210-221 (HEIPAEHRDPPS) show a composition bias toward basic and acidic residues. Disordered stretches follow at residues 210–284 (HEIP…ATPP) and 603–625 (DNRS…GSAQ). The interval 219-437 (PPSKKRKMES…PDSSVSSCSQ (219 aa)) is required for formation of RAD51 foci. Polar residues-rich tracts occupy residues 229–243 (YLQN…TEPL) and 603–612 (DNRSLLSDTN).

As to quaternary structure, interacts via its C-terminus with ATM. Interacts with DYNLL; this interaction inhibits ATMIN transcriptional activity and hence may play a role in a feedback loop whereby DYNLL1 inhibits transactivation of its own promoter by ATMIN. ATMIN.

It localises to the nucleus. In terms of biological role, transcription factor. Plays a crucial role in cell survival and RAD51 foci formation in response to methylating DNA damage. Involved in regulating the activity of ATM in the absence of DNA damage. May play a role in stabilizing ATM. Binds to the DYNLL1 promoter and activates its transcription. The chain is ATM interactor from Mus musculus (Mouse).